A 258-amino-acid chain; its full sequence is Ubiquinone/menaquinone biosynthesis C-methyltransferase UbiE (258 aa).

Positions 1 to 20 (MSESRTSADGGMETSYGFRE) are disordered. S-adenosyl-L-methionine is bound by residues threonine 81, aspartate 102, and 130–131 (NA).

It belongs to the class I-like SAM-binding methyltransferase superfamily. MenG/UbiE family.

It carries out the reaction a 2-demethylmenaquinol + S-adenosyl-L-methionine = a menaquinol + S-adenosyl-L-homocysteine + H(+). The enzyme catalyses a 2-methoxy-6-(all-trans-polyprenyl)benzene-1,4-diol + S-adenosyl-L-methionine = a 5-methoxy-2-methyl-3-(all-trans-polyprenyl)benzene-1,4-diol + S-adenosyl-L-homocysteine + H(+). It participates in quinol/quinone metabolism; menaquinone biosynthesis; menaquinol from 1,4-dihydroxy-2-naphthoate: step 2/2. It functions in the pathway cofactor biosynthesis; ubiquinone biosynthesis. Its function is as follows. Methyltransferase required for the conversion of demethylmenaquinol (DMKH2) to menaquinol (MKH2) and the conversion of 2-polyprenyl-6-methoxy-1,4-benzoquinol (DDMQH2) to 2-polyprenyl-3-methyl-6-methoxy-1,4-benzoquinol (DMQH2). The protein is Ubiquinone/menaquinone biosynthesis C-methyltransferase UbiE of Rhizobium etli (strain CIAT 652).